A 373-amino-acid chain; its full sequence is L-threonine 3-dehydrogenase, mitochondrial (373 aa).

NAD(+)-binding positions include 62–67 (GGLGQL), 88–90 (DIR), 106–107 (DI), Tyr-195, Lys-199, and Ile-225. Tyr-195 (proton donor/acceptor) is an active-site residue.

This sequence belongs to the NAD(P)-dependent epimerase/dehydratase family. In terms of assembly, homodimer.

Its subcellular location is the mitochondrion. The enzyme catalyses L-threonine + NAD(+) = (2S)-2-amino-3-oxobutanoate + NADH + H(+). Its pathway is amino-acid degradation; L-threonine degradation via oxydo-reductase pathway; glycine from L-threonine: step 1/2. Its function is as follows. Catalyzes the NAD(+)-dependent oxidation of L-threonine to 2-amino-3-ketobutyrate, mediating L-threonine catabolism. In Sus scrofa (Pig), this protein is L-threonine 3-dehydrogenase, mitochondrial.